The following is a 404-amino-acid chain: G2/mitotic-specific cyclin-B1 (404 aa).

Belongs to the cyclin family. Cyclin AB subfamily. As to quaternary structure, interacts with the CDK1 protein kinase to form a serine/threonine kinase holoenzyme complex also known as maturation promoting factor (MPF). The cyclin subunit imparts substrate specificity to the complex.

Its function is as follows. Essential for the control of the cell cycle at the G2/M (mitosis) transition. The protein is G2/mitotic-specific cyclin-B1 (ccnb1) of Oryzias latipes (Japanese rice fish).